The sequence spans 588 residues: UDP-N-acetylmuramate--L-alanine ligase (588 aa).

119-125 contributes to the ATP binding site; it reads GSHGKST. Residues 344-371 are compositionally biased toward low complexity; sequence VPAAAGAAAAPPVRRDPATAAAAATTAP. Residues 344–411 form a disordered region; sequence VPAAAGAAAA…APAAGPDHAA (68 aa). The segment covering 372–381 has biased composition (pro residues); sequence IGPPDSPPPT. Over residues 382 to 411 the composition is skewed to low complexity; it reads GIALPRAAPPAVDAPVAATPAPAAGPDHAA.

This sequence belongs to the MurCDEF family.

Its subcellular location is the cytoplasm. The enzyme catalyses UDP-N-acetyl-alpha-D-muramate + L-alanine + ATP = UDP-N-acetyl-alpha-D-muramoyl-L-alanine + ADP + phosphate + H(+). The protein operates within cell wall biogenesis; peptidoglycan biosynthesis. Functionally, cell wall formation. This Frankia alni (strain DSM 45986 / CECT 9034 / ACN14a) protein is UDP-N-acetylmuramate--L-alanine ligase.